A 119-amino-acid polypeptide reads, in one-letter code: Large ribosomal subunit protein uL22 (119 aa).

Belongs to the universal ribosomal protein uL22 family. As to quaternary structure, part of the 50S ribosomal subunit.

Functionally, this protein binds specifically to 23S rRNA; its binding is stimulated by other ribosomal proteins, e.g. L4, L17, and L20. It is important during the early stages of 50S assembly. It makes multiple contacts with different domains of the 23S rRNA in the assembled 50S subunit and ribosome. In terms of biological role, the globular domain of the protein is located near the polypeptide exit tunnel on the outside of the subunit, while an extended beta-hairpin is found that lines the wall of the exit tunnel in the center of the 70S ribosome. The polypeptide is Large ribosomal subunit protein uL22 (Microcystis aeruginosa (strain NIES-843 / IAM M-2473)).